The primary structure comprises 148 residues: Large ribosomal subunit protein uL15 (148 aa).

The segment covering 1–12 (MSDPIKLHDLRP) has biased composition (basic and acidic residues). Residues 1 to 45 (MSDPIKLHDLRPAKGANKAKTRVGRGEASKGKTAGRGTKGTKARN) are disordered.

Belongs to the universal ribosomal protein uL15 family. As to quaternary structure, part of the 50S ribosomal subunit.

Functionally, binds to the 23S rRNA. This Corynebacterium urealyticum (strain ATCC 43042 / DSM 7109) protein is Large ribosomal subunit protein uL15.